The chain runs to 176 residues: dCTP deaminase (176 aa).

DCTP contacts are provided by residues 99-104 and Asp115; that span reads RSTLAR. Glu125 acts as the Proton donor/acceptor in catalysis. A dCTP-binding site is contributed by Gln163.

The protein belongs to the dCTP deaminase family. In terms of assembly, homotrimer.

It catalyses the reaction dCTP + H2O + H(+) = dUTP + NH4(+). It functions in the pathway pyrimidine metabolism; dUMP biosynthesis; dUMP from dCTP (dUTP route): step 1/2. Functionally, catalyzes the deamination of dCTP to dUTP. This Pyrobaculum calidifontis (strain DSM 21063 / JCM 11548 / VA1) protein is dCTP deaminase.